The following is a 210-amino-acid chain: Superoxide dismutase [Mn], mitochondrial (210 aa).

Residues His29, His77, Asp164, and His168 each coordinate Mn(2+).

Belongs to the iron/manganese superoxide dismutase family. In terms of assembly, homotetramer. It depends on Mn(2+) as a cofactor.

The protein resides in the mitochondrion matrix. The enzyme catalyses 2 superoxide + 2 H(+) = H2O2 + O2. Its function is as follows. Destroys superoxide anion radicals which are normally produced within the cells and which are toxic to biological systems. The chain is Superoxide dismutase [Mn], mitochondrial (sodB) from Aspergillus niger.